The following is a 351-amino-acid chain: Uroporphyrinogen decarboxylase (351 aa).

Substrate contacts are provided by residues 32 to 36 (RQAGR), Phe51, Asp82, Tyr157, Ser211, and His326.

This sequence belongs to the uroporphyrinogen decarboxylase family. Homodimer.

The protein localises to the cytoplasm. The catalysed reaction is uroporphyrinogen III + 4 H(+) = coproporphyrinogen III + 4 CO2. It participates in porphyrin-containing compound metabolism; protoporphyrin-IX biosynthesis; coproporphyrinogen-III from 5-aminolevulinate: step 4/4. Functionally, catalyzes the decarboxylation of four acetate groups of uroporphyrinogen III to yield coproporphyrinogen III. The sequence is that of Uroporphyrinogen decarboxylase from Caulobacter vibrioides (strain ATCC 19089 / CIP 103742 / CB 15) (Caulobacter crescentus).